Reading from the N-terminus, the 594-residue chain is Potassium-transporting ATPase potassium-binding subunit (594 aa).

10 helical membrane passes run 3–23, 67–87, 136–156, 179–199, 287–307, 314–334, 415–435, 453–473, 519–539, and 562–582; these read ADFLGLLLLYLAILLCAAPLL, AVAMLVFNVLGVLAVYALQRL, ALTVQNFVSAATGIAVLIALV, LYVLLPLSFILALALVSQGVV, LEMLAILLIPAALCWTFGEMV, VAILAAMTVLFAGFSASAAYF, GLYGMLAFAILAVFIAGLMIG, VALVILATPALVLAGTAVAVL, VLLGLAMWFGRYTIIVAILAL, and LFVALLVGAVLLVGALTYVPA.

The protein belongs to the KdpA family. In terms of assembly, the system is composed of three essential subunits: KdpA, KdpB and KdpC.

The protein resides in the cell inner membrane. In terms of biological role, part of the high-affinity ATP-driven potassium transport (or Kdp) system, which catalyzes the hydrolysis of ATP coupled with the electrogenic transport of potassium into the cytoplasm. This subunit binds the periplasmic potassium ions and delivers the ions to the membrane domain of KdpB through an intramembrane tunnel. The polypeptide is Potassium-transporting ATPase potassium-binding subunit (Bordetella bronchiseptica (strain ATCC BAA-588 / NCTC 13252 / RB50) (Alcaligenes bronchisepticus)).